A 705-amino-acid chain; its full sequence is Forkhead box protein P1 (705 aa).

The segment covering 1–19 (MMQESGSETKSNGSAIQNG) has biased composition (polar residues). A disordered region spans residues 1–41 (MMQESGSETKSNGSAIQNGSSGGNHLLECGALRDTRSNGEA). Ser-113 is modified (phosphoserine). Disordered stretches follow at residues 267-286 (HTAE…TSTC) and 291-326 (APSK…EHPH). Polar residues-rich tracts occupy residues 276 to 286 (NHSSLDLTSTC) and 291 to 311 (APSK…QLSV). Over residues 314–326 (PKRESLSHEEHPH) the composition is skewed to basic and acidic residues. Lys-315 participates in a covalent cross-link: Glycyl lysine isopeptide (Lys-Gly) (interchain with G-Cter in SUMO2). A C2H2-type zinc finger spans residues 334 to 359 (GVCKWPGCEAVCDDFPAFLKHLNSEH). The segment at 376-397 (VQQLELQLAKDKERLQAMMTHL) is leucine-zipper. Glycyl lysine isopeptide (Lys-Gly) (interchain with G-Cter in SUMO2) cross-links involve residues Lys-400 and Lys-405. Positions 410–414 (PLNLV) are CTBP1-binding. Polar residues predominate over residues 418-431 (TLSKSASEASPQSL). Positions 418–450 (TLSKSASEASPQSLPHTPTTPTAPLTPVTQGPS) are disordered. Low complexity predominate over residues 432 to 446 (PHTPTTPTAPLTPVT). Lys-470 participates in a covalent cross-link: Glycyl lysine isopeptide (Lys-Gly) (interchain with G-Cter in SUMO2). Residues 493–583 (RPPFTYASLI…PQKISGNPSL (91 aa)) constitute a DNA-binding region (fork-head). The interval 639–705 (EHTNSNESDS…EDEPVNEDME (67 aa)) is disordered. Over residues 640-651 (HTNSNESDSSPG) the composition is skewed to polar residues. Thr-681 carries the phosphothreonine modification. Residue Ser-686 is modified to Phosphoserine. Acidic residues predominate over residues 695–705 (YEDEPVNEDME).

As to quaternary structure, forms homodimers and heterodimers with FOXP2 and FOXP4. Dimerization is required for DNA-binding. Self-associates. Interacts with CTBP1. Interacts with NCOR2 and AR. Interacts with FOXP2. Interacts with TBR1. Interacts with AURKA; this interaction facilitates the phosphorylation of FOXP1, which suppresses the expression of FBXL7. Interacts with ZMYM2. As to expression, isoform 5 is specifically expressed in embryonic stem cells. Highest expression in the lung, brain, and spleen. Lower expression in heart, skeletal muscle, kidney, small intestine (isoform 3 not present) and liver.

The protein resides in the nucleus. Its function is as follows. Transcriptional repressor. Can act with CTBP1 to synergistically repress transcription but CTPBP1 is not essential. Plays an important role in the specification and differentiation of lung epithelium. Acts cooperatively with FOXP4 to regulate lung secretory epithelial cell fate and regeneration by restricting the goblet cell lineage program; the function may involve regulation of AGR2. Essential transcriptional regulator of B-cell development. Involved in regulation of cardiac muscle cell proliferation. Involved in the columnar organization of spinal motor neurons. Promotes the formation of the lateral motor neuron column (LMC) and the preganglionic motor column (PGC) and is required for respective appropriate motor axon projections. The segment-appropriate generation of spinal cord motor columns requires cooperation with other Hox proteins. Can regulate PITX3 promoter activity; may promote midbrain identity in embryonic stem cell-derived dopamine neurons by regulating PITX3. Negatively regulates the differentiation of T follicular helper cells T(FH)s. Involved in maintenance of hair follicle stem cell quiescence; the function probably involves regulation of FGF18. Represses transcription of various pro-apoptotic genes and cooperates with NF-kappa B-signaling in promoting B-cell expansion by inhibition of caspase-dependent apoptosis. Binds to CSF1R promoter elements and is involved in regulation of monocyte differentiation and macrophage functions; repression of CSF1R in monocytes seems to involve NCOR2 as corepressor. Involved in endothelial cell proliferation, tube formation and migration indicative for a role in angiogenesis; the role in neovascularization seems to implicate suppression of SEMA5B. Can negatively regulate androgen receptor signaling. Acts as a transcriptional activator of the FBXL7 promoter; this activity is regulated by AURKA. Involved in transcriptional regulation in embryonic stem cells (ESCs). Stimulates expression of transcription factors that are required for pluripotency and decreases expression of differentiation-associated genes. Has distinct DNA-binding specifities as compared to the canonical form and preferentially binds DNA with the sequence 5'-CGATACAA-3' (or closely related sequences). Promotes ESC self-renewal and pluripotency. The chain is Forkhead box protein P1 (Foxp1) from Mus musculus (Mouse).